The sequence spans 700 residues: Protein no-on-transient A (700 aa).

The interval 1-270 (MESAGKQDNN…GGGGPRGGED (270 aa)) is disordered. 2 stretches are compositionally biased toward low complexity: residues 9 to 29 (NNAT…ANKN) and 54 to 69 (GGPN…NQNG). The segment covering 70 to 79 (GVTGGGGAVG) has biased composition (gly residues). Composition is skewed to low complexity over residues 80 to 89 (GPNQNKNFGN), 96 to 124 (GNRN…KPNN), and 144 to 175 (AAAG…VHGQ). Residues 176–208 (GNQGGPGNQGGAGNQGGQGNQGGAGNQGNGQGF) are compositionally biased toward gly residues. Position 236 is a phosphoserine (S236). Gly residues predominate over residues 253 to 266 (MGGGGGGGGGGGPR). 2 RRM domains span residues 302-374 (NRLY…FAPN) and 376-457 (TILR…PMEV). Residues 505 to 616 (NLFKTKQDAL…AQQLNSLLDQ (112 aa)) adopt a coiled-coil conformation. The segment covering 568-582 (EMRKREEETMRRHQT) has biased composition (basic and acidic residues). Disordered regions lie at residues 568-591 (EMRK…MNRQ) and 677-700 (MNQG…RRRF). Gly residues predominate over residues 682 to 691 (NQRGNNGGGN).

Functionally, required for normal vision and courtship behavior in Drosophila. This is Protein no-on-transient A (nonA) from Drosophila melanogaster (Fruit fly).